Reading from the N-terminus, the 199-residue chain is Fe/S biogenesis protein NfuA (199 aa).

The [4Fe-4S] cluster site is built by cysteine 151 and cysteine 154.

Belongs to the NfuA family. As to quaternary structure, homodimer. Requires [4Fe-4S] cluster as cofactor.

Its function is as follows. Involved in iron-sulfur cluster biogenesis. Binds a 4Fe-4S cluster, can transfer this cluster to apoproteins, and thereby intervenes in the maturation of Fe/S proteins. Could also act as a scaffold/chaperone for damaged Fe/S proteins. This is Fe/S biogenesis protein NfuA from Xanthomonas oryzae pv. oryzae (strain MAFF 311018).